The following is a 397-amino-acid chain: 3-hydroxy-3-methylglutaryl-coenzyme A reductase (397 aa).

Residues Glu-96 and Asp-301 each act as charge relay system in the active site. The Proton donor role is filled by His-391.

This sequence belongs to the HMG-CoA reductase family.

The enzyme catalyses (R)-mevalonate + 2 NADP(+) + CoA = (3S)-3-hydroxy-3-methylglutaryl-CoA + 2 NADPH + 2 H(+). It functions in the pathway metabolic intermediate biosynthesis; (R)-mevalonate biosynthesis; (R)-mevalonate from acetyl-CoA: step 3/3. Converts HMG-CoA to mevalonate. This Methanothermobacter thermautotrophicus (strain ATCC 29096 / DSM 1053 / JCM 10044 / NBRC 100330 / Delta H) (Methanobacterium thermoautotrophicum) protein is 3-hydroxy-3-methylglutaryl-coenzyme A reductase (hmgA).